The sequence spans 201 residues: Small ribosomal subunit protein uS4 (201 aa).

The segment at 26–48 is disordered; the sequence is LSKKNYPPGQHGNSRKRKTSEYG. One can recognise an S4 RNA-binding domain in the interval 92–155; that stretch reads GRLDNVVFRL…KSLEVIANSL (64 aa).

Belongs to the universal ribosomal protein uS4 family. Part of the 30S ribosomal subunit. Contacts protein S5. The interaction surface between S4 and S5 is involved in control of translational fidelity.

Its function is as follows. One of the primary rRNA binding proteins, it binds directly to 16S rRNA where it nucleates assembly of the body of the 30S subunit. Functionally, with S5 and S12 plays an important role in translational accuracy. This is Small ribosomal subunit protein uS4 from Bacteroides thetaiotaomicron (strain ATCC 29148 / DSM 2079 / JCM 5827 / CCUG 10774 / NCTC 10582 / VPI-5482 / E50).